Here is a 147-residue protein sequence, read N- to C-terminus: 3-dehydroquinate dehydratase (147 aa).

Y22 acts as the Proton acceptor in catalysis. Positions 73, 79, and 86 each coordinate substrate. H99 functions as the Proton donor in the catalytic mechanism. Residues 100–101 (LS) and R110 contribute to the substrate site.

The protein belongs to the type-II 3-dehydroquinase family. As to quaternary structure, homododecamer.

It catalyses the reaction 3-dehydroquinate = 3-dehydroshikimate + H2O. It participates in metabolic intermediate biosynthesis; chorismate biosynthesis; chorismate from D-erythrose 4-phosphate and phosphoenolpyruvate: step 3/7. Functionally, catalyzes a trans-dehydration via an enolate intermediate. This is 3-dehydroquinate dehydratase from Synechococcus sp. (strain WH7803).